Here is a 161-residue protein sequence, read N- to C-terminus: Phosphopantetheine adenylyltransferase (161 aa).

Threonine 10 contributes to the substrate binding site. Residues 10-11 and histidine 18 each bind ATP; that span reads TF. Lysine 42, leucine 74, and arginine 88 together coordinate substrate. Residues 89-91, glutamate 99, and 123-129 contribute to the ATP site; these read GVR and YIHISST.

This sequence belongs to the bacterial CoaD family. As to quaternary structure, homohexamer. The cofactor is Mg(2+).

It is found in the cytoplasm. The catalysed reaction is (R)-4'-phosphopantetheine + ATP + H(+) = 3'-dephospho-CoA + diphosphate. Its pathway is cofactor biosynthesis; coenzyme A biosynthesis; CoA from (R)-pantothenate: step 4/5. In terms of biological role, reversibly transfers an adenylyl group from ATP to 4'-phosphopantetheine, yielding dephospho-CoA (dPCoA) and pyrophosphate. In Aquifex aeolicus (strain VF5), this protein is Phosphopantetheine adenylyltransferase.